A 715-amino-acid polypeptide reads, in one-letter code: Fatty acid oxidation complex subunit alpha (715 aa).

The enoyl-CoA hydratase stretch occupies residues 1-190 (MTTTSAFMLN…RAGLVDDVVP (190 aa)). Residues 306–715 (GPLNSVGILG…WTNGETDQGN (410 aa)) form a 3-hydroxyacyl-CoA dehydrogenase region.

The protein in the N-terminal section; belongs to the enoyl-CoA hydratase/isomerase family. In the central section; belongs to the 3-hydroxyacyl-CoA dehydrogenase family. As to quaternary structure, heterotetramer of two alpha chains (FadJ) and two beta chains (FadI).

Its subcellular location is the cytoplasm. The catalysed reaction is a (3S)-3-hydroxyacyl-CoA = a (2E)-enoyl-CoA + H2O. It carries out the reaction a 4-saturated-(3S)-3-hydroxyacyl-CoA = a (3E)-enoyl-CoA + H2O. It catalyses the reaction a (3S)-3-hydroxyacyl-CoA + NAD(+) = a 3-oxoacyl-CoA + NADH + H(+). The enzyme catalyses (3S)-3-hydroxybutanoyl-CoA = (3R)-3-hydroxybutanoyl-CoA. It functions in the pathway lipid metabolism; fatty acid beta-oxidation. Functionally, catalyzes the formation of a hydroxyacyl-CoA by addition of water on enoyl-CoA. Also exhibits 3-hydroxyacyl-CoA epimerase and 3-hydroxyacyl-CoA dehydrogenase activities. The protein is Fatty acid oxidation complex subunit alpha of Salmonella schwarzengrund (strain CVM19633).